Consider the following 153-residue polypeptide: Cytochrome c-type biogenesis protein CcmE (153 aa).

Residues 1-7 (MKPRHKR) are Cytoplasmic-facing. The helical; Signal-anchor for type II membrane protein transmembrane segment at 8-28 (LAIAGGVLVAVGAIATLVLNA) threads the bilayer. Topologically, residues 29–153 (FQSNLVFFYS…SSQAATGDPR (125 aa)) are periplasmic. The heme site is built by histidine 120 and tyrosine 124. The disordered stretch occupies residues 130 to 153 (AEALKRAKEGGQMQSSQAATGDPR). A compositionally biased stretch (polar residues) spans 141 to 153 (QMQSSQAATGDPR).

Belongs to the CcmE/CycJ family.

The protein localises to the cell inner membrane. In terms of biological role, heme chaperone required for the biogenesis of c-type cytochromes. Transiently binds heme delivered by CcmC and transfers the heme to apo-cytochromes in a process facilitated by CcmF and CcmH. The chain is Cytochrome c-type biogenesis protein CcmE from Leptothrix cholodnii (strain ATCC 51168 / LMG 8142 / SP-6) (Leptothrix discophora (strain SP-6)).